The chain runs to 482 residues: Glucose starvation modulator protein 1 (482 aa).

Positions 20 to 48 form a DNA-binding region, zn(2)-C6 fungal-type; the sequence is CVFCHEKHLQCDVGRPCQNCEKRNIGESC. The 73-residue stretch at 350–422 folds into the PAS domain; the sequence is LLEYENMSKM…KLFNEYLAFS (73 aa).

It belongs to the ERT1/acuK family.

The protein localises to the nucleus. Functionally, transcription factor which regulates nonfermentable carbon utilization. The polypeptide is Glucose starvation modulator protein 1 (GSM1) (Eremothecium gossypii (strain ATCC 10895 / CBS 109.51 / FGSC 9923 / NRRL Y-1056) (Yeast)).